A 900-amino-acid chain; its full sequence is Translation initiation factor IF-2 (900 aa).

Disordered stretches follow at residues 30–77 (GEFV…SLDK) and 89–291 (NGKA…YDSM). Positions 89–112 (NGKATAAPAKAADSGGAAIVSPTT) are enriched in low complexity. Residues 113–129 (PAAPEPPTAVPPSPQAP) are compositionally biased toward pro residues. Low complexity predominate over residues 175–187 (PGTARPGVPRPGA). Over residues 215–271 (GRPGAPGAGRSDAGGGNYRGGGVGAAPGTGFRGRPGGGGGGRPGQRGGAAGAFGRPG) the composition is skewed to gly residues. Positions 275-284 (RRGRKSKRQK) are enriched in basic residues. Positions 396-567 (VRPPVVTVMG…AVLLTADAAL (172 aa)) constitute a tr-type G domain. A G1 region spans residues 405–412 (GHVDHGKT). 405–412 (GHVDHGKT) is a binding site for GTP. The segment at 430–434 (GITQH) is G2. The segment at 455 to 458 (DTPG) is G3. Residues 455–459 (DTPGH) and 509–512 (NKID) each bind GTP. Positions 509–512 (NKID) are G4. Residues 545–547 (SAK) form a G5 region.

Belongs to the TRAFAC class translation factor GTPase superfamily. Classic translation factor GTPase family. IF-2 subfamily.

The protein localises to the cytoplasm. Functionally, one of the essential components for the initiation of protein synthesis. Protects formylmethionyl-tRNA from spontaneous hydrolysis and promotes its binding to the 30S ribosomal subunits. Also involved in the hydrolysis of GTP during the formation of the 70S ribosomal complex. The polypeptide is Translation initiation factor IF-2 (Mycobacterium bovis (strain BCG / Pasteur 1173P2)).